The primary structure comprises 1293 residues: Phosphoribosylformylglycinamidine synthase (1293 aa).

Residues 308–319 (GAATGAGGEIRD) and Ala-675 each bind ATP. Mg(2+) contacts are provided by Asp-676, Glu-715, Asn-719, and Asp-883. Ser-885 is a binding site for ATP. One can recognise a Glutamine amidotransferase type-1 domain in the interval 1040–1293 (MAILREQGVN…MFRNARKFIG (254 aa)). The active-site Nucleophile is the Cys-1133. Active-site residues include His-1258 and Glu-1260.

It in the N-terminal section; belongs to the FGAMS family. In terms of assembly, monomer.

Its subcellular location is the cytoplasm. It catalyses the reaction N(2)-formyl-N(1)-(5-phospho-beta-D-ribosyl)glycinamide + L-glutamine + ATP + H2O = 2-formamido-N(1)-(5-O-phospho-beta-D-ribosyl)acetamidine + L-glutamate + ADP + phosphate + H(+). It participates in purine metabolism; IMP biosynthesis via de novo pathway; 5-amino-1-(5-phospho-D-ribosyl)imidazole from N(2)-formyl-N(1)-(5-phospho-D-ribosyl)glycinamide: step 1/2. In terms of biological role, phosphoribosylformylglycinamidine synthase involved in the purines biosynthetic pathway. Catalyzes the ATP-dependent conversion of formylglycinamide ribonucleotide (FGAR) and glutamine to yield formylglycinamidine ribonucleotide (FGAM) and glutamate. This is Phosphoribosylformylglycinamidine synthase from Methylobacillus flagellatus (strain ATCC 51484 / DSM 6875 / VKM B-1610 / KT).